The chain runs to 247 residues: Uridylate kinase (247 aa).

21 to 24 serves as a coordination point for ATP; that stretch reads KVSG. Glycine 63 lines the UMP pocket. 2 residues coordinate ATP: glycine 64 and arginine 68. UMP-binding positions include aspartate 83 and 144-151; that span reads TGNPFCTT. Positions 171, 172, 177, and 180 each coordinate ATP.

The protein belongs to the UMP kinase family. As to quaternary structure, homohexamer.

The protein localises to the cytoplasm. It carries out the reaction UMP + ATP = UDP + ADP. It functions in the pathway pyrimidine metabolism; CTP biosynthesis via de novo pathway; UDP from UMP (UMPK route): step 1/1. Inhibited by UTP. Its function is as follows. Catalyzes the reversible phosphorylation of UMP to UDP. The sequence is that of Uridylate kinase from Rickettsia rickettsii (strain Sheila Smith).